The following is an 833-amino-acid chain: Bifunctional dethiobiotin synthetase/7,8-diamino-pelargonic acid aminotransferase, mitochondrial (833 aa).

The transit peptide at 1–23 (MIPVTATLIRHRLRHLRHRIRFK) directs the protein to the mitochondrion. Residues 36–299 (HPTYLIWSAN…VLVLPPVPKD (264 aa)) are dethiobiotin synthetase. 47-52 (SLGKTL) serves as a coordination point for ATP. Threonine 51 is a Mg(2+) binding site. Threonine 81 contacts substrate. A Mg(2+)-binding site is contributed by aspartate 88. ATP contacts are provided by residues aspartate 97, 210 to 213 (ETAG), and 270 to 271 (ED). Glutamate 210 lines the Mg(2+) pocket. Positions 332-830 (RLNGMAKLAG…TKLYKRLGEF (499 aa)) are 7,8-diamino-pelargonic acid aminotransferase. (8S)-8-amino-7-oxononanoate is bound at residue 391–392 (WW). 453-454 (GS) provides a ligand contact to pyridoxal 5'-phosphate. A (8S)-8-amino-7-oxononanoate-binding site is contributed by tyrosine 495. ATP-binding positions include 518 to 520 (PWY) and glutamate 545. A pyridoxal 5'-phosphate-binding site is contributed by aspartate 637. Positions 666 and 700 each coordinate (8S)-8-amino-7-oxononanoate. At lysine 666 the chain carries N6-(pyridoxal phosphate)lysine. 701-702 (HS) contributes to the pyridoxal 5'-phosphate binding site. Arginine 797 contacts (8S)-8-amino-7-oxononanoate.

It in the N-terminal section; belongs to the dethiobiotin synthetase family. The protein in the C-terminal section; belongs to the class-III pyridoxal-phosphate-dependent aminotransferase family. BioA subfamily. As to quaternary structure, homodimer. The cofactor is Mg(2+). Pyridoxal 5'-phosphate serves as cofactor.

It is found in the mitochondrion matrix. It catalyses the reaction (7R,8S)-7,8-diammoniononanoate + CO2 + ATP = (4R,5S)-dethiobiotin + ADP + phosphate + 3 H(+). The catalysed reaction is (8S)-8-amino-7-oxononanoate + S-adenosyl-L-methionine = S-adenosyl-4-methylsulfanyl-2-oxobutanoate + (7R,8S)-7,8-diammoniononanoate. The protein operates within cofactor biosynthesis; biotin biosynthesis; biotin from 7,8-diaminononanoate: step 1/2. It functions in the pathway cofactor biosynthesis; biotin biosynthesis; 7,8-diaminononanoate from 8-amino-7-oxononanoate (SAM route): step 1/1. In terms of biological role, bifunctional enzyme that catalyzes two different reactions involved in the biotin biosynthesis. Functionally, catalyzes a mechanistically unusual reaction, the ATP-dependent insertion of CO2 between the N7 and N8 nitrogen atoms of 7,8-diaminopelargonic acid (DAPA) to form an ureido ring. Catalyzes the transfer of the alpha-amino group from S-adenosyl-L-methionine (SAM) to 7-keto-8-aminopelargonic acid (KAPA) to form 7,8-diaminopelargonic acid (DAPA). It is the only aminotransferase known to utilize SAM as an amino donor. This Arabidopsis thaliana (Mouse-ear cress) protein is Bifunctional dethiobiotin synthetase/7,8-diamino-pelargonic acid aminotransferase, mitochondrial.